Here is a 378-residue protein sequence, read N- to C-terminus: Alginate lyase (378 aa).

The N-terminal stretch at 1–28 (MQTPKLIRPTLLSMAILSSMAWATGASA) is a signal peptide. Substrate is bound by residues 67–68 (SK), 140–141 (HT), and Y258. Positions 359–378 (LTKVYDPSHEKGDKGDNDGS) are disordered. Residues 364–378 (DPSHEKGDKGDNDGS) show a composition bias toward basic and acidic residues.

Belongs to the polysaccharide lyase 5 family.

It localises to the periplasm. The catalysed reaction is Eliminative cleavage of alginate to give oligosaccharides with 4-deoxy-alpha-L-erythro-hex-4-enuronosyl groups at their non-reducing ends and beta-D-mannuronate at their reducing end.. Functionally, catalyzes the depolymerization of alginate by cleaving the beta-1,4 glycosidic bond between two adjacent sugar residues via a beta-elimination mechanism. May serve to degrade mislocalized alginate that is trapped in the periplasmic space. This chain is Alginate lyase, found in Pseudomonas syringae pv. syringae (strain B728a).